A 54-amino-acid polypeptide reads, in one-letter code: Large ribosomal subunit protein bL33A (54 aa).

Belongs to the bacterial ribosomal protein bL33 family.

The protein is Large ribosomal subunit protein bL33A of Streptomyces griseus subsp. griseus (strain JCM 4626 / CBS 651.72 / NBRC 13350 / KCC S-0626 / ISP 5235).